Reading from the N-terminus, the 159-residue chain is MNIQIVTVGKLKEKYLVQGIAEYLKRLGAYAKVTIVEVPDEKAPEVLSDAEMKQVKDKEGARILAKIPDDAHVIALAIDGKMKSSEEFAADLDKLATYGKSKVTFVIGGSLGLSEAVLKRSNERISFGRLTLPHQLMRLVLVEQVYRAFRIVRGEPYHK.

S-adenosyl-L-methionine contacts are provided by residues leucine 76, glycine 108, and 127 to 132; that span reads FGRLTL.

Belongs to the RNA methyltransferase RlmH family. In terms of assembly, homodimer.

The protein resides in the cytoplasm. It carries out the reaction pseudouridine(1915) in 23S rRNA + S-adenosyl-L-methionine = N(3)-methylpseudouridine(1915) in 23S rRNA + S-adenosyl-L-homocysteine + H(+). Specifically methylates the pseudouridine at position 1915 (m3Psi1915) in 23S rRNA. The sequence is that of Ribosomal RNA large subunit methyltransferase H from Listeria monocytogenes serotype 4a (strain HCC23).